The sequence spans 358 residues: Trace amine-associated receptor 7d (358 aa).

Residues 1 to 47 are Extracellular-facing; the sequence is MATGDDSFPWDQDSILSRDLFSATSTELCYENLNRSCVRSPYSPGPR. Asn34 carries N-linked (GlcNAc...) asparagine glycosylation. 2 cysteine pairs are disulfide-bonded: Cys37–Cys201 and Cys120–Cys205. A helical transmembrane segment spans residues 48 to 68; the sequence is LILYAVFGFGAVLAVCGNLLV. The Cytoplasmic segment spans residues 69–83; the sequence is MTSILHFRQLHSPAN. The helical transmembrane segment at 84-104 threads the bilayer; the sequence is FLVASLACADFLVGVMVMPFS. At 105 to 121 the chain is on the extracellular side; sequence MVRSVEGCWYFGESYCK. Residues 122 to 143 traverse the membrane as a helical segment; the sequence is FHSCFEGSFCYSSLFHLCFISV. At 144–166 the chain is on the cytoplasmic side; sequence DRYIAVSDPLTYPTRFTASVSGK. The helical transmembrane segment at 167 to 187 threads the bilayer; it reads CITFSWLLSIIYSFSLLYTGA. The Extracellular segment spans residues 188-212; the sequence is NDAGLEDLVSALTCVGGCQIAVNQT. Asn210 carries N-linked (GlcNAc...) asparagine glycosylation. Residues 213–233 form a helical membrane-spanning segment; it reads WVFINFLLFLIPTLVMITVYS. The Cytoplasmic segment spans residues 234–274; that stretch reads KIFLIAKQQAQNIEKMSKQTARASESYKDRVTKRERKAAKT. The helical transmembrane segment at 275 to 295 threads the bilayer; the sequence is LGIAVAAFLLSWLPYFIDSII. At 296-309 the chain is on the extracellular side; it reads DAFLGFITPTYVYE. The helical transmembrane segment at 310–333 threads the bilayer; it reads ILVWIVYYNSAMNPLIYAFFYSWF. The Cytoplasmic segment spans residues 334–358; sequence RKAIKLIVSGKILRENSSTTNLFPE.

This sequence belongs to the G-protein coupled receptor 1 family. In terms of tissue distribution, specifically expressed in neurons of the olfactory epithelium.

The protein resides in the cell membrane. In terms of biological role, olfactory receptor specific for trace amines, such as beta-phenylethylamine (beta-PEA). Trace amine compounds are enriched in animal body fluids and act on trace amine-associated receptors (TAARs) to elicit both intraspecific and interspecific innate behaviors. Ligand-binding causes a conformation change that triggers signaling via G(s)-class of G alpha proteins (GNAL or GNAS). The chain is Trace amine-associated receptor 7d from Mus musculus (Mouse).